The sequence spans 578 residues: CTP synthase 2 (578 aa).

The 260-residue stretch at 305 to 564 (KIALVGKYTN…VAAASGTLGE (260 aa)) folds into the Glutamine amidotransferase type-1 domain. Catalysis depends on for GATase activity residues cysteine 404, histidine 537, and glutamate 539.

The protein belongs to the CTP synthase family. Homodimer. Oligomerizes to a tetramer in the presence of its substrates UTP and ATP. Mg(2+) is required as a cofactor.

It is found in the cytoplasm. It catalyses the reaction UTP + L-glutamine + ATP + H2O = CTP + L-glutamate + ADP + phosphate + 2 H(+). Its pathway is pyrimidine metabolism; CTP biosynthesis via de novo pathway; CTP from UDP: step 2/2. Activated by GTP. Subject to allosteric product inhibition by CTP. Inhibited by p-chloromercuriphenylsulfonic acid, N-ethylmaleimide and cyclopentenylcytosine (CPEC). In terms of biological role, catalyzes the ATP-dependent amination of UTP to CTP with either L-glutamine or ammonia as the source of nitrogen. Plays an important role in the regulation of phospholipid synthesis. This Saccharomyces cerevisiae (strain ATCC 204508 / S288c) (Baker's yeast) protein is CTP synthase 2 (URA8).